Here is a 169-residue protein sequence, read N- to C-terminus: GSK-3-binding protein (169 aa).

Residues 75-100 (TPRGAARHAQHHHHHSPRQQGTGGNK) are disordered. Residues 79–91 (AARHAQHHHHHSP) show a composition bias toward basic residues. The interval 122-145 (DDPHELLQELLLSGNLIKEAVRRL) is involved in GSK-3 binding. The tract at residues 147-169 (MAGESPDPPGSRRVSECTETTVQ) is disordered.

Belongs to the GSK-3-binding protein family.

Its function is as follows. Binds GSK-3 and prevents GSK-3-dependent phosphorylation. Regulates the stability of beta-catenin in embryos. Maternal GBP is required for dorsal-ventral axis formation. The sequence is that of GSK-3-binding protein (gbp) from Xenopus laevis (African clawed frog).